A 193-amino-acid chain; its full sequence is Acyl carrier protein phosphodiesterase (193 aa).

It belongs to the AcpH family.

It carries out the reaction holo-[ACP] + H2O = apo-[ACP] + (R)-4'-phosphopantetheine + H(+). Its function is as follows. Converts holo-ACP to apo-ACP by hydrolytic cleavage of the phosphopantetheine prosthetic group from ACP. The sequence is that of Acyl carrier protein phosphodiesterase from Salmonella agona (strain SL483).